The following is a 30-amino-acid chain: Sperm protamine P5 (30 aa).

A disordered region spans residues 1 to 30 (YRRRRRRGRRGRRRRGRRRRSRGRRRAHGG).

In terms of tissue distribution, testis.

It is found in the nucleus. Its subcellular location is the chromosome. Protamines substitute for histones in the chromatin of sperm during the haploid phase of spermatogenesis. They compact sperm DNA into a highly condensed, stable and inactive complex. In Octopus vulgaris (Common octopus), this protein is Sperm protamine P5.